A 623-amino-acid polypeptide reads, in one-letter code: MATENGAVELEIPSSSTDTAPKAAAGEGPPAAEKDPGPPDPQKDPGPPDPEKDAGPPNPEKELESPDPKKEPDPDSTKDTEAPAPEKGDGASAQPSASSQGPEGEGGLQGEPAEGSAGQPAALPQETATAEASVKKPEAEQGTPGSQDPGEAKEQKKVAEGQAPSKKGSPAFLHSPSCPAAISSLEKPLAEKPLDETLELIFEGVPVTPGPTETEPAKVAEGEKNLPGGSQKEGEEKAAGHAGQDGVQGDTSRGIEFQAVPSERSEVGQALSPTAKEEDCFQILDDCPPPPAPFPHRIVELRPGNINSQFSLNSKEALGGGKFGAVCTCTEKATGLKLAAKVIKKQTPKDKEMVLLEIEVMNQLNHRNLIQLYAAIETPHEIVLFMEYIEGGELFERIVDEDYQLTEVDTMVFVRQICDGILFMHKMRVLHLDLKPENILCVNTTGHLVKIIDFGLARRYNPNEKLKVNFGTPEFLSPEVVNYDQISDKTDMWSLGVITYMLLSGLSPFLGDDDTETLNNVLSSNWYFDEETFEAVSDEAKDFVSNLIVKDQRARMSAAQCLAHPWLNNLAEKAKRCNRRLKSQILLKKYLMKRRWKKNFIAVSAANRFKKISSSGALMALGV.

2 disordered regions span residues 1–179 (MATE…PSCP) and 204–251 (GVPV…QGDT). Position 2 is an N-acetylalanine (Ala2). The span at 20-31 (APKAAAGEGPPA) shows a compositional bias: low complexity. Composition is skewed to basic and acidic residues over residues 32–43 (AEKDPGPPDPQK) and 49–89 (DPEK…EKGD). Low complexity predominate over residues 90–102 (GASAQPSASSQGP). A compositionally biased stretch (basic and acidic residues) spans 150-159 (GEAKEQKKVA). 3 positions are modified to phosphoserine: Ser169, Ser175, and Ser177. The span at 204 to 214 (GVPVTPGPTET) shows a compositional bias: low complexity. A compositionally biased stretch (basic and acidic residues) spans 215-224 (EPAKVAEGEK). A Protein kinase domain is found at 312-567 (LNSKEALGGG…AAQCLAHPWL (256 aa)). Residues 318-326 (LGGGKFGAV) and Lys341 contribute to the ATP site. Asp433 (proton acceptor) is an active-site residue. At Thr472 the chain carries Phosphothreonine. The segment at 601–613 (IAVSAANRFKKIS) is calmodulin-binding.

The protein belongs to the protein kinase superfamily. CAMK Ser/Thr protein kinase family. As to quaternary structure, may interact with centrin.

The protein resides in the cytoplasm. The catalysed reaction is L-seryl-[myosin light chain] + ATP = O-phospho-L-seryl-[myosin light chain] + ADP + H(+). It catalyses the reaction L-threonyl-[myosin light chain] + ATP = O-phospho-L-threonyl-[myosin light chain] + ADP + H(+). Functionally, implicated in the level of global muscle contraction and cardiac function. Phosphorylates a specific serine in the N-terminus of a myosin light chain. The sequence is that of Myosin light chain kinase 2, skeletal/cardiac muscle (MYLK2) from Bos taurus (Bovine).